Reading from the N-terminus, the 238-residue chain is Small ribosomal subunit protein uS2 (238 aa).

Belongs to the universal ribosomal protein uS2 family.

The polypeptide is Small ribosomal subunit protein uS2 (Chloroflexus aurantiacus (strain ATCC 29366 / DSM 635 / J-10-fl)).